Consider the following 135-residue polypeptide: UPF0216 protein MTH_949 (135 aa).

It belongs to the UPF0216 family.

This Methanothermobacter thermautotrophicus (strain ATCC 29096 / DSM 1053 / JCM 10044 / NBRC 100330 / Delta H) (Methanobacterium thermoautotrophicum) protein is UPF0216 protein MTH_949.